Here is a 186-residue protein sequence, read N- to C-terminus: Translation initiation factor IF-3 (186 aa).

The tract at residues 1 to 20 is disordered; sequence MINRNSGKDRDRSRSGDKEL.

It belongs to the IF-3 family. As to quaternary structure, monomer.

Its subcellular location is the cytoplasm. Its function is as follows. IF-3 binds to the 30S ribosomal subunit and shifts the equilibrium between 70S ribosomes and their 50S and 30S subunits in favor of the free subunits, thus enhancing the availability of 30S subunits on which protein synthesis initiation begins. In Borrelia duttonii (strain Ly), this protein is Translation initiation factor IF-3.